A 798-amino-acid chain; its full sequence is Translation initiation factor IF-2 (798 aa).

Residues 40 to 207 (SEQETKLRQA…QQESAKPAVP (168 aa)) are disordered. The span at 57–186 (NTQSKATNNQ…RNNFNNQNRN (130 aa)) shows a compositional bias: low complexity. The span at 187–196 (RFNKKGKKGK) shows a compositional bias: basic residues. The tr-type G domain maps to 300 to 469 (TRPPVVTIMG…LLIAEVEDLK (170 aa)). Positions 309–316 (GHVDHGKT) are G1. Residue 309–316 (GHVDHGKT) participates in GTP binding. Residues 334-338 (GITQH) are G2. The interval 355 to 358 (DTPG) is G3. Residues 355–359 (DTPGH) and 409–412 (NKID) each bind GTP. Residues 409-412 (NKID) form a G4 region. The tract at residues 445–447 (SAK) is G5.

It belongs to the TRAFAC class translation factor GTPase superfamily. Classic translation factor GTPase family. IF-2 subfamily.

It localises to the cytoplasm. Its function is as follows. One of the essential components for the initiation of protein synthesis. Protects formylmethionyl-tRNA from spontaneous hydrolysis and promotes its binding to the 30S ribosomal subunits. Also involved in the hydrolysis of GTP during the formation of the 70S ribosomal complex. The protein is Translation initiation factor IF-2 of Enterococcus faecalis (strain ATCC 700802 / V583).